Reading from the N-terminus, the 273-residue chain is Urease accessory protein UreD (273 aa).

Belongs to the UreD family. In terms of assembly, ureD, UreF and UreG form a complex that acts as a GTP-hydrolysis-dependent molecular chaperone, activating the urease apoprotein by helping to assemble the nickel containing metallocenter of UreC. The UreE protein probably delivers the nickel.

It is found in the cytoplasm. Required for maturation of urease via the functional incorporation of the urease nickel metallocenter. This is Urease accessory protein UreD from Rhizobium leguminosarum bv. trifolii (strain WSM2304).